A 229-amino-acid polypeptide reads, in one-letter code: Large ribosomal subunit protein uL1 (229 aa).

Part of the 50S ribosomal subunit.

In terms of biological role, directly binds to 23S rRNA. Forms what is known as the L1 stalk, which protrudes beyond the 70S ribosome surface. The stalk is preferentially stabilized in 70S versus 50S crystals. Interacts with the E site tRNA, blocking the exit path. This blockage implies that this section of the ribosome must be able to move to release the deacetylated tRNA. Its function is as follows. Protein L1 is also a translational repressor protein, it controls the translation of the L11 operon by binding to its mRNA. This chain is Large ribosomal subunit protein uL1 (rplA), found in Thermus thermophilus (strain ATCC 27634 / DSM 579 / HB8).